A 70-amino-acid chain; its full sequence is Neuropeptide SIFamide (70 aa).

The N-terminal stretch at 1-22 (MRFIVALCLFAIVMCIIHKAEG) is a signal peptide. Position 34 is a phenylalanine amide (Phe34). Positions 38–70 (GVVEYDTTGRALSALCEIASETCQAWYQTLENK) are excised as a propeptide.

Expressed in antennal lobe (AL) and gnathal ganglion (GNG) with expression detected in most animals (at protein level). Not expressed in corpora cardiaca (CC) and corpora allata (CA) (at protein level).

It localises to the secreted. Functionally, ligand for the neuropeptide SIFamide receptor. The protein is Neuropeptide SIFamide of Agrotis ipsilon (Black cutworm moth).